Here is a 291-residue protein sequence, read N- to C-terminus: Maintenance of mitochondrial morphology protein 1 (291 aa).

Over 1-16 the chain is Lumenal; it reads MPNNYVFSLQPTFTQG. A helical transmembrane segment spans residues 17–37; the sequence is LILGQLSILVLLGMILKFLFL. Residues 38–291 are Cytoplasmic-facing; it reads DSTQHPFESS…KKEMSDADLS (254 aa). Residues 73 to 277 form the SMP-LTD domain; sequence NAESAEWFNV…LPGLASVVDV (205 aa).

It belongs to the MMM1 family. In terms of assembly, homodimer. Component of the ER-mitochondria encounter structure (ERMES) or MDM complex, composed of MMM1, MDM10, MDM12 and MDM34. An MMM1 homodimer associates with one molecule of MDM12 on each side in a pairwise head-to-tail manner, and the SMP-LTD domains of MMM1 and MDM12 generate a continuous hydrophobic tunnel for phospholipid trafficking.

It is found in the endoplasmic reticulum membrane. In terms of biological role, component of the ERMES/MDM complex, which serves as a molecular tether to connect the endoplasmic reticulum (ER) and mitochondria. Components of this complex are involved in the control of mitochondrial shape and protein biogenesis, and function in nonvesicular lipid trafficking between the ER and mitochondria. The MDM12-MMM1 subcomplex functions in the major beta-barrel assembly pathway that is responsible for biogenesis of all outer membrane beta-barrel proteins, and acts in a late step after the SAM complex. The MDM10-MDM12-MMM1 subcomplex further acts in the TOM40-specific pathway after the action of the MDM12-MMM1 complex. Essential for establishing and maintaining the structure of mitochondria and maintenance of mtDNA nucleoids. The polypeptide is Maintenance of mitochondrial morphology protein 1 (Laccaria bicolor (strain S238N-H82 / ATCC MYA-4686) (Bicoloured deceiver)).